The sequence spans 188 residues: COMM domain-containing protein 1 (188 aa).

The tract at residues 1 to 122 (MAAELEGSKC…CWDRGLRSLS (122 aa)) is sufficient for interaction with SLC12A2. 3 residues coordinate Cu cation: histidine 100, methionine 109, and histidine 133. Residues 117 to 185 (GLRSLSWRVD…EVEESISTLM (69 aa)) enclose the COMM domain. The interval 124–188 (RVDGKSQSRH…ESISTLMQPA (65 aa)) is required for binding to PtdIns(4,5)P2.

The protein belongs to the COMM domain-containing protein 1 family. Component of the commander complex consisting of the CCC subcomplex and the retriever subcomplex. Component of the CCC (COMMD/CCDC22/CCDC93) subcomplex consisting of COMMD1, COMMD2, COMMD3, COMMD4, COMMD5, COMMD6, COMMD7, COMMD8, COMMD9, COMMD10, CCDC22 and CCDC93; within the complex forms a heterodimer with COMMD6. Interacts with VPS35L; the interaction associates the CCC complex with the retriever complex. Identified in a complex with an E3 ubiquitin ligase complex composed of TCEB1/elongin C, CUL2, SOCS1 and RBX1; in the complex interacts directly with SOCS1 and CUL2. Identified in a complex with NF-kappa-B. Interacts directly with SLC12A2. Interacts directly with ATP7B (via the N-terminal region). Interacts with ATP7A. Interacts with FAM107A; this interaction stabilizes COMMD1 in the nucleus. Interacts with CCS, CDKN2A, RELA, REL, RELB, NFKB1/p105, NFKB2/p100, NFKBIB, SCNN1D, SCNN1B, CFTR, CLU, SGK1, AKT1, CUL1, CUL2, CUL3, CUL4A, CUL4B, CUL5, CUL7, HIF1A. In terms of processing, ubiquitinated; undergoes both 'Lys-63'- and 'Lys-48'-linked polyubiquitination. Ubiquitinated by XIAP, leading to its proteasomal degradation.

The protein resides in the nucleus. Its subcellular location is the cytoplasm. The protein localises to the endosome membrane. It is found in the cytoplasmic vesicle. It localises to the early endosome. The protein resides in the recycling endosome. Functionally, scaffold protein in the commander complex that is essential for endosomal recycling of transmembrane cargos; the commander complex is composed of the CCC subcomplex and the retriever subcomplex. Can modulate activity of cullin-RING E3 ubiquitin ligase (CRL) complexes by displacing CAND1; in vitro promotes CRL E3 activity and dissociates CAND1 from CUL1 and CUL2. Promotes ubiquitination of NF-kappa-B subunit RELA and its subsequent proteasomal degradation. Down-regulates NF-kappa-B activity. Involved in the regulation of membrane expression and ubiquitination of SLC12A2. Modulates Na(+) transport in epithelial cells by regulation of apical cell surface expression of amiloride-sensitive sodium channel (ENaC) subunits and by promoting their ubiquitination presumably involving NEDD4L. Promotes the localization of SCNN1D to recycling endosomes. Promotes CFTR cell surface expression through regulation of its ubiquitination. Down-regulates SOD1 activity by interfering with its homodimerization. Plays a role in copper ion homeostasis. Involved in copper-dependent ATP7A trafficking between the trans-Golgi network and vesicles in the cell periphery; the function is proposed to depend on its association within the CCC complex and cooperation with the WASH complex on early endosomes. Can bind one copper ion per monomer. May function to facilitate biliary copper excretion within hepatocytes. Binds to phosphatidylinositol 4,5-bisphosphate (PtdIns(4,5)P2). Involved in the regulation of HIF1A-mediated transcription; competes with ARNT/Hif-1-beta for binding to HIF1A resulting in decreased DNA binding and impaired transcriptional activation by HIF-1. Negatively regulates neuroblastoma G1/S phase cell cycle progression and cell proliferation by stimulating ubiquitination of NF-kappa-B subunit RELA and NF-kappa-B degradation in a FAM107A- and actin-dependent manner. The sequence is that of COMM domain-containing protein 1 (COMMD1) from Bos taurus (Bovine).